Reading from the N-terminus, the 140-residue chain is Transcriptional regulator YdaT (140 aa).

Transcriptional regulator that causes a severe detrimental growth effect and reduces cell viability. When expressed, it alters expression of a variety of bacterial regulons normally controlled by the transcriptional regulatory protein RcsA, resulting in deficient lipopolysaccharide biosynthesis and cell division. YdaT has no effect on Rac prophage excision. Overexpression of ydaST reduces growth and leads to loss of cell viability. May contribute to toxicity and morphological defects. This Escherichia coli (strain K12) protein is Transcriptional regulator YdaT (ydaT).